Here is a 164-residue protein sequence, read N- to C-terminus: MELADKASFRDAMAHVGAAVNIITTDGPAGRAGFTASAVCSVTDTPPTLLVCLNRSASVWPVFSEHHTLCVNTLAAGQEALSTLFGGKTAMDERFAAADWQTGATGCPRLEAALVSFDCRIDQRVSVGTHDILFCHVVAITRHPEPRGLMWFDRGYHTLMRPAC.

It belongs to the non-flavoprotein flavin reductase family. RutF subfamily.

The enzyme catalyses FMNH2 + NAD(+) = FMN + NADH + 2 H(+). In terms of biological role, catalyzes the reduction of FMN to FMNH2 which is used to reduce pyrimidine by RutA via the Rut pathway. The polypeptide is FMN reductase (NADH) RutF (Klebsiella variicola (strain At-22)).